A 106-amino-acid polypeptide reads, in one-letter code: UPF0145 protein MA_3383 (106 aa).

The protein belongs to the UPF0145 family.

This chain is UPF0145 protein MA_3383, found in Methanosarcina acetivorans (strain ATCC 35395 / DSM 2834 / JCM 12185 / C2A).